Here is a 63-residue protein sequence, read N- to C-terminus: Large ribosomal subunit protein bL28 (63 aa).

Belongs to the bacterial ribosomal protein bL28 family.

In Geotalea uraniireducens (strain Rf4) (Geobacter uraniireducens), this protein is Large ribosomal subunit protein bL28.